The primary structure comprises 613 residues: Histone acetyltransferase KAT7 (613 aa).

Residues 1-175 are disordered; that stretch reads MAIGVVKRNA…SDLSHRPKRR (175 aa). Phosphoserine occurs at positions 12, 52, 55, 59, and 66. The span at 44-59 shows a compositional bias: low complexity; that stretch reads VTRSSARLSQSSQDSS. 2 positions are modified to phosphothreonine: threonine 87 and threonine 90. Positions 98–107 are enriched in polar residues; sequence QTRSSGSETE. Serine 104 is subject to Phosphoserine. A Phosphothreonine modification is found at threonine 106. Residues 112–127 are compositionally biased toward basic and acidic residues; that stretch reads FSDRETKNTADHDESP. Phosphoserine occurs at positions 113 and 126. Threonine 130 carries the post-translational modification Phosphothreonine. Low complexity predominate over residues 136-147; sequence PSSESDIDISSP. A compositionally biased stretch (basic and acidic residues) spans 150–170; the sequence is SHDESIAKDMSLKDSGSDLSH. Phosphoserine is present on residues serine 160, serine 164, serine 166, and serine 180. Residues 178–221 form a CCHHC-type zinc finger; that stretch reads HESYNFNMKCPTPGCNSLGHLTGKHERHFSISGCPLYHNLSADE. N6-acetyllysine is present on residues lysine 201 and lysine 279. Lysine 325 is covalently cross-linked (Glycyl lysine isopeptide (Lys-Gly) (interchain with G-Cter in SUMO2)). The MYST-type HAT domain occupies 334–609; that stretch reads EGSNMIKTIA…MDPSCLKWTP (276 aa). Residue lysine 340 forms a Glycyl lysine isopeptide (Lys-Gly) (interchain with G-Cter in ubiquitin) linkage. The C2HC MYST-type zinc finger occupies 367-392; sequence LYMCEFCLKYMKSQTILRRHMAKCVW. Residues cysteine 370, cysteine 373, histidine 386, and cysteine 390 each contribute to the Zn(2+) site. Position 434 is an N6-acetyllysine; by autocatalysis (lysine 434). Residues 477 to 479 and 485 to 490 each bind acetyl-CoA; these read ILT and RQGYGK. At serine 508 the chain carries Phosphoserine. Glutamate 510 serves as the catalytic Proton donor/acceptor. Positions 514 and 523 each coordinate acetyl-CoA.

The protein belongs to the MYST (SAS/MOZ) family. In terms of assembly, component of the HBO1 complex composed of KAT7/HBO1, MEAF6, ING4 or ING5, and one scaffold subunit: complexes containing BRPF scaffold (BRPF1, BRD1/BRPF2 or BRPF3) direct KAT7/HBO1 specificity towards H3K14ac, while complexes containing JADE scaffold (JADE1, JADE2 and JADE3) mediate acetylation of histone H4. Interacts with MCM2 and ORC1. Interacts with the androgen receptor (AR) in the presence of dihydrotestosterone. Interacts with CDT1. Interacts with MAP2K1 and CUL1. Interacts with p53/TP53; leading to inhibit histone acetyltransferase activity. Post-translationally, phosphorylated at Ser-52 and Ser-55 by ATR in response to DNA damage, promoting its ubiquitination by the CRL4(DDB2) complex and subsequent degradation. Phosphorylation at Ser-52 and Ser-55 by ATR in response to ultraviolet-induced DNA, promotes localization to DNA damage sites. Phosphorylation at Ser-59 by PLK1 during mitosis seems important for prereplicative complex formation and DNA replication licensing, and requires prior phosphorylation at Thr-87 and Thr-90 by CDK1. Phosphorylated by MAP2K1, which accelerates its degradation. Ubiquitinated at Lys-340, leading to proteasomal degradation. Ubiquitinated by the CRL4(DDB2) complex following phosphorylation by ATR, leading to its subsequent degradation. In terms of processing, autoacetylation at Lys-434 is required for proper function. As to expression, widely expressed in adult tissues.

The protein resides in the nucleus. It localises to the chromosome. Its subcellular location is the centromere. It is found in the cytoplasm. The protein localises to the cytosol. The enzyme catalyses L-lysyl-[protein] + acetyl-CoA = N(6)-acetyl-L-lysyl-[protein] + CoA + H(+). Histone acetyltransferase activity is inhibited by GMNN in the context of a complex with CDT1, inhibiting histone H4 acetylation and DNA replication licensing. Its function is as follows. Catalytic subunit of histone acetyltransferase HBO1 complexes, which specifically mediate acetylation of histone H3 at 'Lys-14' (H3K14ac), thereby regulating various processes, such as gene transcription, protein ubiquitination, immune regulation, stem cell pluripotent and self-renewal maintenance and embryonic development. Some complexes also catalyze acetylation of histone H4 at 'Lys-5', 'Lys-8' and 'Lys-12' (H4K5ac, H4K8ac and H4K12ac, respectively), regulating DNA replication initiation, regulating DNA replication initiation. Specificity of the HBO1 complexes is determined by the scaffold subunit: complexes containing BRPF scaffold (BRPF1, BRD1/BRPF2 or BRPF3) direct KAT7/HBO1 specificity towards H3K14ac, while complexes containing JADE (JADE1, JADE2 and JADE3) scaffold direct KAT7/HBO1 specificity towards histone H4. H3K14ac promotes transcriptional elongation by facilitating the processivity of RNA polymerase II. Acts as a key regulator of hematopoiesis by forming a complex with BRD1/BRPF2, directing KAT7/HBO1 specificity towards H3K14ac and promoting erythroid differentiation. H3K14ac is also required for T-cell development. KAT7/HBO1-mediated acetylation facilitates two consecutive steps, licensing and activation, in DNA replication initiation: H3K14ac facilitates the activation of replication origins, and histone H4 acetylation (H4K5ac, H4K8ac and H4K12ac) facilitates chromatin loading of MCM complexes, promoting DNA replication licensing. Acts as a positive regulator of centromeric CENPA assembly: recruited to centromeres and mediates histone acetylation, thereby preventing centromere inactivation mediated by SUV39H1, possibly by increasing histone turnover/exchange. Involved in nucleotide excision repair: phosphorylation by ATR in response to ultraviolet irradiation promotes its localization to DNA damage sites, where it mediates histone acetylation to facilitate recruitment of XPC at the damaged DNA sites. Acts as an inhibitor of NF-kappa-B independently of its histone acetyltransferase activity. In terms of biological role, plays a central role in the maintenance of leukemia stem cells in acute myeloid leukemia (AML). Acts by mediating acetylation of histone H3 at 'Lys-14' (H3K14ac), thereby facilitating the processivity of RNA polymerase II to maintain the high expression of key genes, such as HOXA9 and HOXA10 that help to sustain the functional properties of leukemia stem cells. The polypeptide is Histone acetyltransferase KAT7 (Mus musculus (Mouse)).